We begin with the raw amino-acid sequence, 150 residues long: D-aminoacyl-tRNA deacylase (150 aa).

The Gly-cisPro motif, important for rejection of L-amino acids signature appears at 138–139 (GP).

Belongs to the DTD family. In terms of assembly, homodimer.

The protein resides in the cytoplasm. The catalysed reaction is glycyl-tRNA(Ala) + H2O = tRNA(Ala) + glycine + H(+). It carries out the reaction a D-aminoacyl-tRNA + H2O = a tRNA + a D-alpha-amino acid + H(+). Functionally, an aminoacyl-tRNA editing enzyme that deacylates mischarged D-aminoacyl-tRNAs. Also deacylates mischarged glycyl-tRNA(Ala), protecting cells against glycine mischarging by AlaRS. Acts via tRNA-based rather than protein-based catalysis; rejects L-amino acids rather than detecting D-amino acids in the active site. By recycling D-aminoacyl-tRNA to D-amino acids and free tRNA molecules, this enzyme counteracts the toxicity associated with the formation of D-aminoacyl-tRNA entities in vivo and helps enforce protein L-homochirality. The polypeptide is D-aminoacyl-tRNA deacylase (Akkermansia muciniphila (strain ATCC BAA-835 / DSM 22959 / JCM 33894 / BCRC 81048 / CCUG 64013 / CIP 107961 / Muc)).